The primary structure comprises 436 residues: 3-ketoacyl-CoA thiolase (436 aa).

The Acyl-thioester intermediate role is filled by C99. Catalysis depends on proton acceptor residues H392 and C422.

Belongs to the thiolase-like superfamily. Thiolase family. As to quaternary structure, heterotetramer of two alpha chains (FadJ) and two beta chains (FadI).

The protein localises to the cytoplasm. The catalysed reaction is an acyl-CoA + acetyl-CoA = a 3-oxoacyl-CoA + CoA. It participates in lipid metabolism; fatty acid beta-oxidation. In terms of biological role, catalyzes the final step of fatty acid oxidation in which acetyl-CoA is released and the CoA ester of a fatty acid two carbons shorter is formed. The polypeptide is 3-ketoacyl-CoA thiolase (Enterobacter sp. (strain 638)).